Here is a 207-residue protein sequence, read N- to C-terminus: Ribonuclease HII (207 aa).

In terms of domain architecture, RNase H type-2 spans 20–207; the sequence is QLFAGVDEVG…KPVKRVLGIE (188 aa). Residues Asp-26, Glu-27, and Asp-118 each coordinate a divalent metal cation.

Belongs to the RNase HII family. Mn(2+) is required as a cofactor. The cofactor is Mg(2+).

Its subcellular location is the cytoplasm. The enzyme catalyses Endonucleolytic cleavage to 5'-phosphomonoester.. Endonuclease that specifically degrades the RNA of RNA-DNA hybrids. The sequence is that of Ribonuclease HII from Aliivibrio fischeri (strain ATCC 700601 / ES114) (Vibrio fischeri).